Consider the following 622-residue polypeptide: MAAAPRAGRRRGQPLLALLLLLLAPLPPGAPPGADAYFPEERWSPESPLQAPRVLIALLARNAAHALPTTLGALERLRHPRERTALWVATDHNMDNTSTVLREWLVAVKSLYHSVEWRPAEEPRSYPDEEGPKHWSDSRYEHVMKLRQAALKSARDMWADYILFVDADNLILNPDTLSLLIAENKTVVAPMLDSRAAYSNFWCGMTSQGYYKRTPAYIPIRKRDRRGCFAVPMVHSTFLIDLRKAASRNLAFYPPHPDYTWSFDDIIVFAFSCKQAEVQMYVCNKEEYGFLPVPLRAHSTLQDEAESFMHVQLEVMVKHPPAEPSRFISAPTKTPDKMGFDEVFMINLRRRQDRRERMLRALQAQEIECRLVEAVDGKAMNTSQVEALGIQMLPGYRDPYHGRPLTKGELGCFLSHYNIWKEVVDRGLQKSLVFEDDLRFEIFFKRRLMNLMRDVEREGLDWDLIYVGRKRMQVEHPEKAVPRVRNLVEADYSYWTLAYVISLQGARKLLAAEPLSKMLPVDEFLPVMFDKHPVSEYKAHFSLRNLHAFSVEPLLIYPTHYTGDDGYVSDTETSVVWNNEHVKTDWDRAKSQKMREQQALSREAKNSDVLQSPLDSAARDEL.

A signal peptide spans 1–29 (MAAAPRAGRRRGQPLLALLLLLLAPLPPG). Residues Asn-96, Asn-184, and Asn-381 are each glycosylated (N-linked (GlcNAc...) asparagine). Basic and acidic residues predominate over residues 588-606 (RAKSQKMREQQALSREAKN). The segment at 588–622 (RAKSQKMREQQALSREAKNSDVLQSPLDSAARDEL) is disordered. Positions 619 to 622 (RDEL) match the Endoplasmic reticulum retention motif motif.

It belongs to the glycosyltransferase 25 family. N-glycosylated. Ubiquitous with higher levels in placenta, heart, lung and spleen.

The protein resides in the endoplasmic reticulum lumen. It carries out the reaction (5R)-5-hydroxy-L-lysyl-[collagen] + UDP-alpha-D-galactose = (5R)-5-O-(beta-D-galactosyl)-5-hydroxy-L-lysyl-[collagen] + UDP + H(+). Functionally, beta-galactosyltransferase that transfers beta-galactose to hydroxylysine residues of type I collagen. By acting on collagen glycosylation, facilitates the formation of collagen triple helix. Also involved in the biosynthesis of collagen type IV. The protein is Procollagen galactosyltransferase 1 (COLGALT1) of Homo sapiens (Human).